Consider the following 238-residue polypeptide: uncharacterized protein (238 aa).

This is an uncharacterized protein from Escherichia coli (strain K12).